A 259-amino-acid polypeptide reads, in one-letter code: Putative aldolase class 2 protein PA3430 (259 aa).

His113, His115, and His176 together coordinate Zn(2+).

The protein belongs to the aldolase class II family. The cofactor is Zn(2+).

The polypeptide is Putative aldolase class 2 protein PA3430 (Pseudomonas aeruginosa (strain ATCC 15692 / DSM 22644 / CIP 104116 / JCM 14847 / LMG 12228 / 1C / PRS 101 / PAO1)).